A 122-amino-acid chain; its full sequence is Basic phospholipase A2 homolog (122 aa).

Disulfide bonds link Cys-26-Cys-115, Cys-28-Cys-44, Cys-43-Cys-95, Cys-49-Cys-122, Cys-50-Cys-88, Cys-57-Cys-81, and Cys-75-Cys-86. Positions 105–117 (KRYMTYPNILCSS) are important for membrane-damaging activities in eukaryotes and bacteria; heparin-binding.

This sequence belongs to the phospholipase A2 family. Group II subfamily. N49 sub-subfamily. Expressed by the venom gland.

The protein resides in the secreted. The protein is Basic phospholipase A2 homolog of Gloydius halys (Chinese water mocassin).